Consider the following 89-residue polypeptide: Small ribosomal subunit protein uS15 (89 aa).

This sequence belongs to the universal ribosomal protein uS15 family. Part of the 30S ribosomal subunit. Forms a bridge to the 50S subunit in the 70S ribosome, contacting the 23S rRNA.

In terms of biological role, one of the primary rRNA binding proteins, it binds directly to 16S rRNA where it helps nucleate assembly of the platform of the 30S subunit by binding and bridging several RNA helices of the 16S rRNA. Forms an intersubunit bridge (bridge B4) with the 23S rRNA of the 50S subunit in the ribosome. The chain is Small ribosomal subunit protein uS15 from Mesorhizobium japonicum (strain LMG 29417 / CECT 9101 / MAFF 303099) (Mesorhizobium loti (strain MAFF 303099)).